A 147-amino-acid polypeptide reads, in one-letter code: 3-dehydroquinate dehydratase (147 aa).

The active-site Proton acceptor is Tyr-22. Positions 74, 80, and 87 each coordinate substrate. The active-site Proton donor is His-101. Residues 102 to 103 and Arg-112 each bind substrate; that span reads IS.

The protein belongs to the type-II 3-dehydroquinase family. As to quaternary structure, homododecamer.

The catalysed reaction is 3-dehydroquinate = 3-dehydroshikimate + H2O. It functions in the pathway metabolic intermediate biosynthesis; chorismate biosynthesis; chorismate from D-erythrose 4-phosphate and phosphoenolpyruvate: step 3/7. Its function is as follows. Catalyzes a trans-dehydration via an enolate intermediate. This Lachnospira eligens (strain ATCC 27750 / DSM 3376 / VPI C15-48 / C15-B4) (Eubacterium eligens) protein is 3-dehydroquinate dehydratase.